The sequence spans 153 residues: Transcriptional repressor NrdR (153 aa).

The tract at residues 1 to 22 is disordered; that stretch reads MRCPACHHNGTRVLDSRPAHEG. The segment at 3–34 is a zinc-finger region; the sequence is CPACHHNGTRVLDSRPAHEGRSIRRRRECESC. The 91-residue stretch at 49-139 folds into the ATP-cone domain; the sequence is LIVVKKDGTR…VYRQFKDINV (91 aa).

It belongs to the NrdR family. It depends on Zn(2+) as a cofactor.

Functionally, negatively regulates transcription of bacterial ribonucleotide reductase nrd genes and operons by binding to NrdR-boxes. This Halalkalibacterium halodurans (strain ATCC BAA-125 / DSM 18197 / FERM 7344 / JCM 9153 / C-125) (Bacillus halodurans) protein is Transcriptional repressor NrdR.